Reading from the N-terminus, the 156-residue chain is Arginine repressor (156 aa).

This sequence belongs to the ArgR family.

The protein resides in the cytoplasm. It functions in the pathway amino-acid biosynthesis; L-arginine biosynthesis [regulation]. In terms of biological role, regulates arginine biosynthesis genes. The sequence is that of Arginine repressor from Vibrio cholerae serotype O1 (strain ATCC 39315 / El Tor Inaba N16961).